Reading from the N-terminus, the 479-residue chain is Ribosomal lysine N-methyltransferase 2 (479 aa).

The SET domain maps to 22 to 325 (PNISICESPE…INEELFLNYG (304 aa)). Residue Y324 coordinates S-adenosyl-L-methionine.

Belongs to the class V-like SAM-binding methyltransferase superfamily. RKM2 family.

In terms of biological role, S-adenosyl-L-methionine-dependent protein-lysine N-methyltransferase that trimethylates 60S ribosomal protein L12 (RPL12A and RPL12B) at 'Lys-4' and 'Lys-11'. The polypeptide is Ribosomal lysine N-methyltransferase 2 (Saccharomyces cerevisiae (strain ATCC 204508 / S288c) (Baker's yeast)).